The sequence spans 236 residues: Small ribosomal subunit protein uS2c (236 aa).

The protein belongs to the universal ribosomal protein uS2 family.

Its subcellular location is the plastid. The protein localises to the chloroplast. This Oenothera parviflora (Small-flowered evening primrose) protein is Small ribosomal subunit protein uS2c (rps2).